The sequence spans 78 residues: Large ribosomal subunit protein eL38 (78 aa).

It belongs to the eukaryotic ribosomal protein eL38 family. In terms of assembly, component of the large ribosomal subunit. Mature ribosomes consist of a small (40S) and a large (60S) subunit. The 40S subunit contains about 32 different proteins and 1 molecule of RNA (18S). The 60S subunit contains 45 different proteins and 3 molecules of RNA (25S, 5.8S and 5S).

The protein resides in the cytoplasm. Functionally, component of the ribosome, a large ribonucleoprotein complex responsible for the synthesis of proteins in the cell. The small ribosomal subunit (SSU) binds messenger RNAs (mRNAs) and translates the encoded message by selecting cognate aminoacyl-transfer RNA (tRNA) molecules. The large subunit (LSU) contains the ribosomal catalytic site termed the peptidyl transferase center (PTC), which catalyzes the formation of peptide bonds, thereby polymerizing the amino acids delivered by tRNAs into a polypeptide chain. The nascent polypeptides leave the ribosome through a tunnel in the LSU and interact with protein factors that function in enzymatic processing, targeting, and the membrane insertion of nascent chains at the exit of the ribosomal tunnel. In Candida albicans (strain SC5314 / ATCC MYA-2876) (Yeast), this protein is Large ribosomal subunit protein eL38.